The chain runs to 227 residues: Venom allergen 5 (227 aa).

Positions M1–A21 are cleaved as a signal peptide. Cystine bridges form between C25–C37, C29–C125, C49–C117, and C193–C210. Positions E69–Y212 constitute an SCP domain.

Belongs to the CRISP family. Venom allergen 5-like subfamily. Expressed by the venom gland.

The protein localises to the secreted. In Polistes dominula (European paper wasp), this protein is Venom allergen 5.